The sequence spans 422 residues: SPbeta prophage-derived glycosyltransferase SunS (422 aa).

Belongs to the glycosyltransferase 2 family.

In terms of biological role, transfers a hexose moiety onto 'Cys-41' of bacteriocin sublancin-168 (SunA). Accepts UDP-glucose (UDP-Glc), UDP-N-acetylglucosamine (UDP-GlcNAc), UDP-galactose (UDP-Gal), UDP-xylose (UDP-Xyl) and GDP-mannose as substrate. This chain is SPbeta prophage-derived glycosyltransferase SunS (sunS), found in Bacillus subtilis (strain 168).